Here is a 1450-residue protein sequence, read N- to C-terminus: Collagen alpha-1(I) chain (1450 aa).

The first 22 residues, 1–22 (MFSFVDNRLLVLLAACVLLVRA), serve as a signal peptide directing secretion. A propeptide spans 23 to 148 (LDQEDIESGL…PPGLGGNFAP (126 aa)) (N-terminal propeptide). The region spanning 31–90 (GLCHQEGTTYSDKDVWKPEPCVICVCDNGNIMCDDVTCGDYPVDCPNAEIPFGECCPVCP) is the VWFC domain. The segment at 97-1201 (YSEQTGVEGP…EPKSHGDGRY (1105 aa)) is disordered. The segment covering 106–116 (PKGEVGPKGDR) has biased composition (basic and acidic residues). Residues 130 to 140 (LPGPPGPPGPP) show a composition bias toward pro residues. Gln-149 bears the Pyrrolidone carboxylic acid mark. Lys-157 bears the Allysine mark. Residues 166 to 181 (PMGPMGPRGPPGPSGS) are compositionally biased toward pro residues. 4-hydroxyproline occurs at positions 176, 182, 194, 197, 212, 227, 242, and 248. The segment covering 182 to 206 (PGPQGFQGPSGEPGEPGAAGALGPR) has biased composition (low complexity). Residues 215–229 (NGDDGESGKPGRPGE) are compositionally biased toward basic and acidic residues. Lys-251 bears the 5-hydroxylysine; alternate mark. Lys-251 carries an O-linked (Gal...) hydroxylysine; alternate glycan. Residues 266–292 (NGPAGPKGEPGNPGENGAPGQAGPRGL) show a composition bias toward low complexity. 4-hydroxyproline is present on residues Pro-275, Pro-278, Pro-284, Pro-293, Pro-299, Pro-314, Pro-320, Pro-329, Pro-332, Pro-359, Pro-362, Pro-374, Pro-380, Pro-389, Pro-395, Pro-398, and Pro-413. Residues 317 to 331 (AGPPGPTGPTGPPGF) are compositionally biased toward pro residues. Positions 352-374 (PQGARGEPGAPGPAGAAGPSGNP) are enriched in low complexity. Residues 378-387 (GQPGGKGATG) are compositionally biased toward gly residues. Residues 388 to 443 (SPGIAGAPGFPGARGAPGPQGPAGAPGPKGNNGEPGAQGNKGEPGAKGEPGPAGVQ) are compositionally biased toward low complexity. Lys-416 is subject to 5-hydroxylysine. 7 positions are modified to 4-hydroxyproline: Pro-422, Pro-437, Pro-446, Pro-461, Pro-467, Pro-476, and Pro-482. The segment covering 471–480 (GERGGPGSRG) has biased composition (gly residues). Lys-491 is modified (5-hydroxylysine). Residues Pro-494, Pro-515, Pro-521, Pro-530, Pro-533, Pro-551, Pro-569, Pro-578, Pro-590, Pro-608, Pro-626, Pro-632, Pro-644, Pro-650, Pro-656, and Pro-668 each carry the 4-hydroxyproline modification. Low complexity-rich tracts occupy residues 568–578 (FPGPKGAAGEP) and 586–596 (VAGPPGATGAP). Low complexity predominate over residues 637–650 (PAGEAGKPGEQGAP). Residues 669–678 (GERGGQGPAG) are compositionally biased toward gly residues. The span at 679–701 (AQGPRGSPGSPGNDGAKGEAGAA) shows a compositional bias: low complexity. Residues Pro-689, Pro-704, Pro-710, Pro-716, and Pro-725 each carry the 4-hydroxyproline modification. Residues 702–711 (GAPGGRGPPG) are compositionally biased toward gly residues. Lys-737 carries the post-translational modification 5-hydroxylysine. Pro-743, Pro-758, Pro-764, Pro-785, Pro-791, Pro-794, Pro-803, Pro-809, Pro-827, Pro-836, and Pro-845 each carry 4-hydroxyproline. Positions 796 to 806 (PAGICGPPGAD) are enriched in low complexity. A compositionally biased stretch (low complexity) spans 817–869 (DAGPKGDAGAPGPAGPTGAPGPAGNVGAPGPKGTRGAAGPPGATGFPGAAGRL). Lys-848 is modified (5-hydroxylysine). 2 positions are modified to 4-hydroxyproline: Pro-857 and Pro-863. Pro-871 is subject to 3-hydroxyproline. A 4-hydroxyproline mark is found at Pro-872, Pro-881, Pro-884, Pro-908, Pro-914, Pro-923, Pro-932, Pro-950, Pro-962, Pro-968, Pro-983, Pro-989, Pro-995, Pro-1004, and Pro-1010. The span at 917–943 (SGEKGSPGSDGPAGAPGIPGPQGIAGQ) shows a compositional bias: low complexity. Positions 982–997 (PPGPSGPPGLGGPPGE) are enriched in pro residues. Lys-1019 bears the 5-hydroxylysine mark. Over residues 1028–1043 (SGPPGAPGAPGAPGPV) the composition is skewed to pro residues. Residues Pro-1031, Pro-1034, and Pro-1037 each carry the 4-hydroxyproline modification. The segment covering 1064–1078 (AGPSGVRGAPGPAGA) has biased composition (low complexity). Over residues 1079–1093 (RGDKGEAGEQGERGM) the composition is skewed to basic and acidic residues. The residue at position 1082 (Lys-1082) is a 5-hydroxylysine. Residue Lys-1094 is modified to 5-hydroxylysine; alternate. O-linked (Gal...) hydroxylysine; alternate glycosylation occurs at Lys-1094. A 4-hydroxyproline mark is found at Pro-1106 and Pro-1109. Residues 1120-1129 (PSGPAGPRGP) are compositionally biased toward pro residues. A 4-hydroxyproline mark is found at Pro-1130 and Pro-1145. Over residues 1130–1145 (PGSSGSTGKDGVNGLP) the composition is skewed to low complexity. The residue at position 1150 (Pro-1150) is a 3-hydroxyproline. Pro-1151 is modified (4-hydroxyproline). The span at 1163-1178 (AGPPGPPGPPGPPGPP) shows a compositional bias: pro residues. Pro-1165 bears the 3-hydroxyproline mark. Pro-1166 carries the 4-hydroxyproline modification. Pro-1168 bears the 3-hydroxyproline mark. Pro-1169 carries the 4-hydroxyproline modification. Residue Pro-1171 is modified to 3-hydroxyproline. 3 positions are modified to 4-hydroxyproline: Pro-1172, Pro-1175, and Pro-1178. Allysine is present on Lys-1194. Positions 1205–1450 (DDANVVRDRD…GIDIGPVCFL (246 aa)) are cleaved as a propeptide — C-terminal propeptide. The region spanning 1215–1450 (LEVDTTLKSL…GIDIGPVCFL (236 aa)) is the Fibrillar collagen NC1 domain. 3 cysteine pairs are disulfide-bonded: Cys-1245-Cys-1277, Cys-1285-Cys-1448, and Cys-1356-Cys-1401. Ca(2+)-binding residues include Asp-1263, Asn-1265, Gln-1266, Cys-1268, and Asp-1271. Residue Asn-1351 is glycosylated (N-linked (GlcNAc...) asparagine).

It belongs to the fibrillar collagen family. As to quaternary structure, trimers of one alpha 2(I) and two alpha 1(I) chains. In terms of processing, contains mostly 4-hydroxyproline. Proline residues at the third position of the tripeptide repeating unit (G-X-Y) are hydroxylated in some or all of the chains. Post-translationally, contains 3-hydroxyproline at a few sites. This modification occurs on the first proline residue in the sequence motif Gly-Pro-Hyp, where Hyp is 4-hydroxyproline. Lysine residues at the third position of the tripeptide repeating unit (G-X-Y) are 5-hydroxylated in some or all of the chains. In terms of processing, O-glycosylated on hydroxylated lysine residues. The O-linked glycan consists of a Glc-Gal disaccharide.

The protein resides in the secreted. It localises to the extracellular space. It is found in the extracellular matrix. Type I collagen is a member of group I collagen (fibrillar forming collagen). The protein is Collagen alpha-1(I) chain (COL1A1) of Cynops pyrrhogaster (Japanese fire-bellied newt).